Consider the following 293-residue polypeptide: Pantothenate synthetase (293 aa).

Residue 30–37 participates in ATP binding; sequence MGYLHKGH. The active-site Proton donor is histidine 37. Glutamine 61 is a binding site for (R)-pantoate. Residue glutamine 61 participates in beta-alanine binding. Residue 147–150 participates in ATP binding; sequence GEKD. Glutamine 153 serves as a coordination point for (R)-pantoate. ATP-binding positions include valine 176 and 184–187; that span reads CSSR.

This sequence belongs to the pantothenate synthetase family. Homodimer.

The protein localises to the cytoplasm. The catalysed reaction is (R)-pantoate + beta-alanine + ATP = (R)-pantothenate + AMP + diphosphate + H(+). The protein operates within cofactor biosynthesis; (R)-pantothenate biosynthesis; (R)-pantothenate from (R)-pantoate and beta-alanine: step 1/1. Functionally, catalyzes the condensation of pantoate with beta-alanine in an ATP-dependent reaction via a pantoyl-adenylate intermediate. This Brucella canis (strain ATCC 23365 / NCTC 10854 / RM-666) protein is Pantothenate synthetase.